A 325-amino-acid chain; its full sequence is MKYTFNEEKEFDIVAIGRACIDLNAVEYNRPMEQTMTFSKYVGGSPANIAIGSSKLGLKTGFIGKIPDDQHGRFIETYMRNTGVDTSQMAVDKDGHKAGLAFTEILSPEECSILMYRDDVADLYLAPSEVNEDYIAKSKMLLVSGTALAKSPSREAVLKAVQLAKKHQVKVVFELDYRPYTWTSAEETAVYYTLVAEQSDIVIGTRDEFDVMENKSGGSNEESVQHLFAHSADLVVIKHGVEGSYAYSKSGDVFRAKAYKTKVLKTFGAGDSYASAFLYGLVSGKDIETALKYGSASASIVVSKHSSSEAMPTVAEIEELIAAQS.

It belongs to the carbohydrate kinase PfkB family.

The enzyme catalyses 5-dehydro-2-deoxy-D-gluconate + ATP = 6-phospho-5-dehydro-2-deoxy-D-gluconate + ADP + H(+). The protein operates within polyol metabolism; myo-inositol degradation into acetyl-CoA; acetyl-CoA from myo-inositol: step 5/7. Functionally, catalyzes the phosphorylation of 5-dehydro-2-deoxy-D-gluconate (2-deoxy-5-keto-D-gluconate or DKG) to 6-phospho-5-dehydro-2-deoxy-D-gluconate (DKGP). The protein is 5-dehydro-2-deoxygluconokinase of Bacillus licheniformis (strain ATCC 14580 / DSM 13 / JCM 2505 / CCUG 7422 / NBRC 12200 / NCIMB 9375 / NCTC 10341 / NRRL NRS-1264 / Gibson 46).